The following is a 293-amino-acid chain: RNA pseudouridylate synthase domain-containing protein 1 (293 aa).

Asp67 is a catalytic residue.

It belongs to the pseudouridine synthase RluA family.

This is RNA pseudouridylate synthase domain-containing protein 1 (rpusd1) from Danio rerio (Zebrafish).